Here is a 631-residue protein sequence, read N- to C-terminus: Beta-galactosidase-1-like protein 3 (631 aa).

Glu-203 acts as the Proton donor in catalysis. Glu-277 (nucleophile) is an active-site residue.

This sequence belongs to the glycosyl hydrolase 35 family.

The sequence is that of Beta-galactosidase-1-like protein 3 (Glb1l3) from Rattus norvegicus (Rat).